The following is a 340-amino-acid chain: Cysteinyl leukotriene receptor 1 (340 aa).

The Extracellular segment spans residues 1–31 (MDGVRNLTVSCASSNTCNDTIDDFRNQVYST). Residues asparagine 6 and asparagine 18 are each glycosylated (N-linked (GlcNAc...) asparagine). A helical transmembrane segment spans residues 32-52 (LYSMITVVGFFGNGFVLYVLI). The Cytoplasmic portion of the chain corresponds to 53-60 (KTYHEKSA). The chain crosses the membrane as a helical span at residues 61 to 81 (YQVYMINLAVADLLCVCTLPL). The Extracellular segment spans residues 82–109 (RVVYYVHKGIWLFGDFLCRLSTYALYVN). Cysteine 99 and cysteine 176 are disulfide-bonded. A helical transmembrane segment spans residues 110 to 130 (LYCSIFFMTAMSFFRCIAIVF). Over 131 to 144 (PVQNINLITHKKAK) the chain is Cytoplasmic. The chain crosses the membrane as a helical span at residues 145–165 (IVCIAIWIFVILTSSPFLMST). At 166 to 196 (SYKDEKNNTKCFEPPQXNQAKYHVLVLHYVS) the chain is on the extracellular side. A glycan (N-linked (GlcNAc...) asparagine) is linked at asparagine 172. A helical membrane pass occupies residues 197 to 217 (LFVGFIIPFVIIIVCYTMIIL). Residues 218–233 (TLLKNSMKKNISSRKK) lie on the Cytoplasmic side of the membrane. The chain crosses the membrane as a helical span at residues 234 to 254 (AIGMIIVVTAAFLISFMPYHI). Topologically, residues 255–279 (QRTIHLHFLHNDTKHCDSVLRMQKS) are extracellular. Asparagine 265 carries N-linked (GlcNAc...) asparagine glycosylation. The helical transmembrane segment at 280–300 (VXITLSLAASNCCFDPLLYFF) threads the bilayer. The Cytoplasmic segment spans residues 301 to 340 (SGGNFREGLSTFRKHSLSTMTYVPKKKTSLPEKAQEIYKE).

It belongs to the G-protein coupled receptor 1 family.

It is found in the cell membrane. Receptor for cysteinyl leukotrienes mediating constriction of the microvascular smooth muscle during an inflammatory response. This response is mediated via a G-protein that activates a phosphatidylinositol-calcium second messenger system. The polypeptide is Cysteinyl leukotriene receptor 1 (CYSLTR1) (Sus scrofa (Pig)).